Consider the following 329-residue polypeptide: Phenylalanine--tRNA ligase alpha subunit (329 aa).

Residue Glu254 participates in Mg(2+) binding.

It belongs to the class-II aminoacyl-tRNA synthetase family. Phe-tRNA synthetase alpha subunit type 1 subfamily. In terms of assembly, tetramer of two alpha and two beta subunits. Requires Mg(2+) as cofactor.

It is found in the cytoplasm. The catalysed reaction is tRNA(Phe) + L-phenylalanine + ATP = L-phenylalanyl-tRNA(Phe) + AMP + diphosphate + H(+). In Histophilus somni (strain 129Pt) (Haemophilus somnus), this protein is Phenylalanine--tRNA ligase alpha subunit.